Consider the following 83-residue polypeptide: MNKVVSINIAEILKSHATHKSLMVRNKNFLRSSNGSVPIYSNSILQPPTTATNNNNENNFNLVNDTIDDLELAIENAGGKQFW.

This is an uncharacterized protein from Dictyostelium discoideum (Social amoeba).